Here is a 198-residue protein sequence, read N- to C-terminus: Proteasome subunit beta 1 (198 aa).

Positions 1–6 are cleaved as a propeptide — removed in mature form; by autocatalysis; the sequence is MSGPGA. Thr-7 serves as the catalytic Nucleophile.

Belongs to the peptidase T1B family. In terms of assembly, the 20S proteasome core is composed of 14 alpha and 14 beta subunits that assemble into four stacked heptameric rings, resulting in a barrel-shaped structure. The two inner rings, each composed of seven catalytic beta subunits, are sandwiched by two outer rings, each composed of seven alpha subunits. The catalytic chamber with the active sites is on the inside of the barrel. Has a gated structure, the ends of the cylinder being occluded by the N-termini of the alpha-subunits. Is capped at one or both ends by the proteasome regulatory ATPase, PAN.

Its subcellular location is the cytoplasm. It catalyses the reaction Cleavage of peptide bonds with very broad specificity.. The formation of the proteasomal ATPase PAN-20S proteasome complex, via the docking of the C-termini of PAN into the intersubunit pockets in the alpha-rings, triggers opening of the gate for substrate entry. Interconversion between the open-gate and close-gate conformations leads to a dynamic regulation of the 20S proteasome proteolysis activity. Functionally, component of the proteasome core, a large protease complex with broad specificity involved in protein degradation. In Ignicoccus hospitalis (strain KIN4/I / DSM 18386 / JCM 14125), this protein is Proteasome subunit beta 1.